A 293-amino-acid polypeptide reads, in one-letter code: Small ribosomal subunit biogenesis GTPase RsgA (293 aa).

In terms of domain architecture, CP-type G spans 63-223 (QNELVRPPIA…VADTPGFSAL (161 aa)). GTP contacts are provided by residues 112 to 115 (SKID) and 166 to 174 (GQSGVGKSS). Residues C247, C252, H254, and C260 each coordinate Zn(2+).

Belongs to the TRAFAC class YlqF/YawG GTPase family. RsgA subfamily. In terms of assembly, monomer. Associates with 30S ribosomal subunit, binds 16S rRNA. Requires Zn(2+) as cofactor.

The protein localises to the cytoplasm. In terms of biological role, one of several proteins that assist in the late maturation steps of the functional core of the 30S ribosomal subunit. Helps release RbfA from mature subunits. May play a role in the assembly of ribosomal proteins into the subunit. Circularly permuted GTPase that catalyzes slow GTP hydrolysis, GTPase activity is stimulated by the 30S ribosomal subunit. This Geobacillus kaustophilus (strain HTA426) protein is Small ribosomal subunit biogenesis GTPase RsgA.